We begin with the raw amino-acid sequence, 194 residues long: Molybdenum cofactor guanylyltransferase (194 aa).

GTP contacts are provided by residues 12–14 (LAG), Lys25, Asn53, Asp71, and Asp101. Residue Asp101 coordinates Mg(2+).

It belongs to the MobA family. As to quaternary structure, monomer. An equilibrium exists between a monomeric and oligomeric form of the enzyme, which could be an octamer; whether this oligomeric arrangement is of functional relevance is unclear. Interacts with MoeA and MobB in vivo. The cofactor is Mg(2+). It depends on Mn(2+) as a cofactor.

The protein localises to the cytoplasm. It catalyses the reaction Mo-molybdopterin + GTP + H(+) = Mo-molybdopterin guanine dinucleotide + diphosphate. Its function is as follows. Transfers a GMP moiety from GTP to Mo-molybdopterin (Mo-MPT) cofactor (Moco or molybdenum cofactor) to form Mo-molybdopterin guanine dinucleotide (Mo-MGD) cofactor. Is also involved in the biosynthesis of the bis-MGD form of the Moco cofactor (Mo-bisMGD) in which the metal is symmetrically ligated by the dithiolene groups of two MGD molecules. Is necessary and sufficient for the in vitro activation of the DMSOR molybdoenzyme that uses the Mo-bisMGD form of molybdenum cofactor, which implies formation and efficient insertion of the cofactor into the enzyme without the need of a chaperone. Is specific for GTP since other nucleotides such as ATP and GMP cannot be utilized. This Escherichia coli (strain K12) protein is Molybdenum cofactor guanylyltransferase (mobA).